A 90-amino-acid polypeptide reads, in one-letter code: Small ribosomal subunit protein uS15c (90 aa).

The protein belongs to the universal ribosomal protein uS15 family. As to quaternary structure, part of the 30S ribosomal subunit.

It is found in the plastid. It localises to the chloroplast. The polypeptide is Small ribosomal subunit protein uS15c (rps15) (Gossypium barbadense (Sea Island cotton)).